Consider the following 185-residue polypeptide: Elongation factor P (185 aa).

Belongs to the elongation factor P family.

It is found in the cytoplasm. It functions in the pathway protein biosynthesis; polypeptide chain elongation. In terms of biological role, involved in peptide bond synthesis. Stimulates efficient translation and peptide-bond synthesis on native or reconstituted 70S ribosomes in vitro. Probably functions indirectly by altering the affinity of the ribosome for aminoacyl-tRNA, thus increasing their reactivity as acceptors for peptidyl transferase. This Kosmotoga olearia (strain ATCC BAA-1733 / DSM 21960 / TBF 19.5.1) protein is Elongation factor P.